The following is a 405-amino-acid chain: L-carnitine CoA-transferase (405 aa).

Positions 97 and 104 each coordinate CoA. The active-site Nucleophile is D169.

The protein belongs to the CoA-transferase III family. CaiB subfamily. As to quaternary structure, homodimer.

It is found in the cytoplasm. The enzyme catalyses crotonobetainyl-CoA + (R)-carnitine = crotonobetaine + (R)-carnitinyl-CoA. The catalysed reaction is 4-(trimethylamino)butanoyl-CoA + (R)-carnitine = (R)-carnitinyl-CoA + 4-(trimethylamino)butanoate. Its pathway is amine and polyamine metabolism; carnitine metabolism. Functionally, catalyzes the reversible transfer of the CoA moiety from gamma-butyrobetainyl-CoA to L-carnitine to generate L-carnitinyl-CoA and gamma-butyrobetaine. Is also able to catalyze the reversible transfer of the CoA moiety from gamma-butyrobetainyl-CoA or L-carnitinyl-CoA to crotonobetaine to generate crotonobetainyl-CoA. The protein is L-carnitine CoA-transferase of Escherichia coli (strain SE11).